A 362-amino-acid chain; its full sequence is Alternative oxidase, mitochondrial (362 aa).

A mitochondrion-targeting transit peptide spans 1–64 (MNTPKVNILY…RGFTTTSVVR (64 aa)). The chain crosses the membrane as a helical span at residues 156-176 (LVRFIFLESIAGVPGMVAGML). Glu163, Glu202, and His205 together coordinate Fe cation. The helical transmembrane segment at 222-242 (LILGAQGVFFNAMFLSYLVSP) threads the bilayer. Positions 253, 310, and 313 each coordinate Fe cation.

It belongs to the alternative oxidase family. It depends on Fe cation as a cofactor.

It localises to the mitochondrion inner membrane. In terms of biological role, catalyzes cyanide-resistant oxygen consumption. May increase respiration when the cytochrome respiratory pathway is restricted, or in response to low temperatures. This Gelasinospora sp. (strain S23) protein is Alternative oxidase, mitochondrial (aod-1).